The chain runs to 276 residues: BES1/BZR1 homolog protein 1 (276 aa).

Disordered regions lie at residues 1–30 (MTAS…RERR), 76–125 (TTYR…PTRF), and 155–191 (SAPV…PTRR). Positions 14–87 (RMPTWKEREN…YRKGSRPTET (74 aa)) are required for DNA-binding. Over residues 84 to 103 (PTETTVPCSSIQLSPQSSAF) the composition is skewed to polar residues. Low complexity predominate over residues 104–122 (QSPIPSYQASPSSSSYPSP). Thr159 carries the phosphothreonine modification. Positions 164 to 174 (SPRRSNPRLPR) are enriched in low complexity. The span at 175-189 (WQSSNFPVSAPSSPT) shows a compositional bias: polar residues.

This sequence belongs to the BZR/LAT61 family. Phosphorylated. Phosphorylation increases protein degradation.

The polypeptide is BES1/BZR1 homolog protein 1 (BEH1) (Arabidopsis thaliana (Mouse-ear cress)).